Here is an 80-residue protein sequence, read N- to C-terminus: RNA-binding protein Hfq (80 aa).

Residues 10-70 (DLFLNTVRKQ…ISTIMPGQPM (61 aa)) form the Sm domain.

Belongs to the Hfq family. In terms of assembly, homohexamer.

RNA chaperone that binds small regulatory RNA (sRNAs) and mRNAs to facilitate mRNA translational regulation in response to envelope stress, environmental stress and changes in metabolite concentrations. Also binds with high specificity to tRNAs. The chain is RNA-binding protein Hfq from Rhizobium etli (strain CIAT 652).